The sequence spans 331 residues: HTH-type transcriptional regulator RipA (331 aa).

The HTH araC/xylS-type domain occupies 112–209 (RAVAQVLVSN…GATPSTFTTG (98 aa)). 2 DNA-binding regions (H-T-H motif) span residues 129–150 (EEFA…LKST) and 176–199 (ISVV…RRHT).

In terms of biological role, under iron limitation, RipA negatively controls the expression of the acn (aconitase), catA (catechol 1,2 dioxygenase), leuCD (isopropylmalate dehydratase), narKGHJI (nitrite/nitrate transporter and nitrate reductase), sdhCAB (succinate dehydrogenase), pta (phosphotransacetylase) and katA (catalase) genes. Binds to the consensus sequence in the promoter region. The protein is HTH-type transcriptional regulator RipA of Corynebacterium glutamicum (strain ATCC 13032 / DSM 20300 / JCM 1318 / BCRC 11384 / CCUG 27702 / LMG 3730 / NBRC 12168 / NCIMB 10025 / NRRL B-2784 / 534).